A 247-amino-acid polypeptide reads, in one-letter code: Small ribosomal subunit protein uS3 (247 aa).

A KH type-2 domain is found at 39-107 (VRDYLRKKLD…PAQVNIEEIT (69 aa)). Positions 213 to 247 (SVYNPPKEDKTRAPKRRGRSNSNRRNSDRANTDRG) are disordered. The span at 237–247 (RNSDRANTDRG) shows a compositional bias: basic and acidic residues.

The protein belongs to the universal ribosomal protein uS3 family. As to quaternary structure, part of the 30S ribosomal subunit. Forms a tight complex with proteins S10 and S14.

In terms of biological role, binds the lower part of the 30S subunit head. Binds mRNA in the 70S ribosome, positioning it for translation. The sequence is that of Small ribosomal subunit protein uS3 from Psychrobacter sp. (strain PRwf-1).